The following is a 151-amino-acid chain: SsrA-binding protein (151 aa).

It belongs to the SmpB family.

It localises to the cytoplasm. In terms of biological role, required for rescue of stalled ribosomes mediated by trans-translation. Binds to transfer-messenger RNA (tmRNA), required for stable association of tmRNA with ribosomes. tmRNA and SmpB together mimic tRNA shape, replacing the anticodon stem-loop with SmpB. tmRNA is encoded by the ssrA gene; the 2 termini fold to resemble tRNA(Ala) and it encodes a 'tag peptide', a short internal open reading frame. During trans-translation Ala-aminoacylated tmRNA acts like a tRNA, entering the A-site of stalled ribosomes, displacing the stalled mRNA. The ribosome then switches to translate the ORF on the tmRNA; the nascent peptide is terminated with the 'tag peptide' encoded by the tmRNA and targeted for degradation. The ribosome is freed to recommence translation, which seems to be the essential function of trans-translation. The chain is SsrA-binding protein from Campylobacter concisus (strain 13826).